Consider the following 387-residue polypeptide: Protein RecA (387 aa).

Residue 78–85 coordinates ATP; the sequence is GPESSGKT. The span at 355-369 shows a compositional bias: basic and acidic residues; it reads KSIERDTKETKETKS. Residues 355–387 are disordered; it reads KSIERDTKETKETKSKQPVSFSTEADGDIAVGE.

It belongs to the RecA family.

It is found in the cytoplasm. Functionally, can catalyze the hydrolysis of ATP in the presence of single-stranded DNA, the ATP-dependent uptake of single-stranded DNA by duplex DNA, and the ATP-dependent hybridization of homologous single-stranded DNAs. It interacts with LexA causing its activation and leading to its autocatalytic cleavage. The chain is Protein RecA from Leptospira biflexa serovar Patoc (strain Patoc 1 / ATCC 23582 / Paris).